Reading from the N-terminus, the 1802-residue chain is Bromodomain and WD repeat-containing protein 3 (1802 aa).

8 WD repeats span residues 170-209 (IKMH…IWAT), 213-251 (RLLA…VWCL), 255-297 (APVA…FWQW), 307-347 (RPVK…IYYL), 353-393 (EKIA…IWQY), 400-452 (SIVL…VWNS), 456-495 (QLLH…IWDL), and 502-542 (RNYF…LFGF). Phosphoserine is present on residues S693 and S703. Positions 768 to 910 (KPSYTTQRND…PKQTRKKKGG (143 aa)) are disordered. Basic residues predominate over residues 785–795 (SLRRTQRKRQH). Over residues 796-817 (TYQTRSNIEHNSQASCQNSGVQ) the composition is skewed to polar residues. A compositionally biased stretch (acidic residues) spans 818-829 (EDSDSSSEEDET). The span at 846-859 (SESSSSDSSSEYSD) shows a compositional bias: low complexity. Phosphoserine occurs at positions 885 and 886. Over residues 889–898 (ENLKSLEERQ) the composition is skewed to basic and acidic residues. A compositionally biased stretch (basic residues) spans 899-909 (KKPKQTRKKKG). A Bromo 1 domain is found at 1138-1245 (WGAHSRDEEC…DVLLRFIGDQ (108 aa)). Disordered regions lie at residues 1262–1292 (RNST…VKCR), 1326–1361 (RQPA…LSED), 1438–1500 (IQSQ…SPVS), and 1520–1725 (SSSS…RAKR). The span at 1266-1278 (DAEEDTEIVDLDS) shows a compositional bias: acidic residues. One can recognise a Bromo 2 domain in the interval 1300-1430 (CNPDAWKKQC…ALFESHIKNI (131 aa)). Over residues 1441 to 1453 (QKRRRPRYRKRLR) the composition is skewed to basic residues. Residues 1454–1468 (SSSSSLSSSGAPSPK) are compositionally biased toward low complexity. Positions 1479-1499 (KNDQNTSVSHARTSSPFSSPV) are enriched in polar residues. Low complexity predominate over residues 1520 to 1533 (SSSSFGGYSRSGNS). Phosphoserine occurs at positions 1577 and 1579. The span at 1587–1600 (GEDKEKKETKEKSH) shows a compositional bias: basic and acidic residues. A compositionally biased stretch (low complexity) spans 1601–1626 (LSTSESGELGSSLSSESTCGSDSDSE). Over residues 1627–1643 (STSRTDQDYVDGDHDYS) the composition is skewed to basic and acidic residues. 2 stretches are compositionally biased toward basic residues: residues 1649–1666 (RPKR…RNWK) and 1684–1697 (RGGR…RGSR). Position 1763 is a phosphoserine (S1763).

In terms of tissue distribution, found in most adult tissues. Down-regulated in a majority of the B-CLL cases examined.

Its function is as follows. Plays a role in the regulation of cell morphology and cytoskeletal organization. Required in the control of cell shape. The polypeptide is Bromodomain and WD repeat-containing protein 3 (BRWD3) (Homo sapiens (Human)).